Here is a 571-residue protein sequence, read N- to C-terminus: Glutamate--tRNA ligase (571 aa).

The short motif at 110-120 (PNPNGPATLGS) is the 'HIGH' region element.

The protein belongs to the class-I aminoacyl-tRNA synthetase family. Glutamate--tRNA ligase type 2 subfamily.

It is found in the cytoplasm. It catalyses the reaction tRNA(Glu) + L-glutamate + ATP = L-glutamyl-tRNA(Glu) + AMP + diphosphate. In terms of biological role, catalyzes the attachment of glutamate to tRNA(Glu) in a two-step reaction: glutamate is first activated by ATP to form Glu-AMP and then transferred to the acceptor end of tRNA(Glu). The sequence is that of Glutamate--tRNA ligase from Methanosarcina mazei (strain ATCC BAA-159 / DSM 3647 / Goe1 / Go1 / JCM 11833 / OCM 88) (Methanosarcina frisia).